Consider the following 120-residue polypeptide: Large ribosomal subunit protein uL18 (120 aa).

Belongs to the universal ribosomal protein uL18 family. In terms of assembly, part of the 50S ribosomal subunit; part of the 5S rRNA/L5/L18/L25 subcomplex. Contacts the 5S and 23S rRNAs.

Functionally, this is one of the proteins that bind and probably mediate the attachment of the 5S RNA into the large ribosomal subunit, where it forms part of the central protuberance. This chain is Large ribosomal subunit protein uL18, found in Beijerinckia indica subsp. indica (strain ATCC 9039 / DSM 1715 / NCIMB 8712).